A 347-amino-acid polypeptide reads, in one-letter code: Ribosomal RNA small subunit methyltransferase C (347 aa).

The protein belongs to the methyltransferase superfamily. RsmC family. Monomer.

It is found in the cytoplasm. It catalyses the reaction guanosine(1207) in 16S rRNA + S-adenosyl-L-methionine = N(2)-methylguanosine(1207) in 16S rRNA + S-adenosyl-L-homocysteine + H(+). Its function is as follows. Specifically methylates the guanine in position 1207 of 16S rRNA in the 30S particle. The chain is Ribosomal RNA small subunit methyltransferase C from Yersinia pseudotuberculosis serotype IB (strain PB1/+).